Consider the following 275-residue polypeptide: Translation initiation factor 2 subunit alpha (275 aa).

The S1 motif domain occupies glycine 12 to lysine 83.

Belongs to the eIF-2-alpha family. As to quaternary structure, heterotrimer composed of an alpha, a beta and a gamma chain.

EIF-2 functions in the early steps of protein synthesis by forming a ternary complex with GTP and initiator tRNA. This Thermococcus onnurineus (strain NA1) protein is Translation initiation factor 2 subunit alpha.